The sequence spans 499 residues: Cytosol aminopeptidase (499 aa).

Lys-267 and Asp-272 together coordinate Mn(2+). Lys-279 is an active-site residue. Mn(2+)-binding residues include Asp-290, Asp-349, and Glu-351. The active site involves Arg-353.

It belongs to the peptidase M17 family. It depends on Mn(2+) as a cofactor.

Its subcellular location is the cytoplasm. It carries out the reaction Release of an N-terminal amino acid, Xaa-|-Yaa-, in which Xaa is preferably Leu, but may be other amino acids including Pro although not Arg or Lys, and Yaa may be Pro. Amino acid amides and methyl esters are also readily hydrolyzed, but rates on arylamides are exceedingly low.. The catalysed reaction is Release of an N-terminal amino acid, preferentially leucine, but not glutamic or aspartic acids.. Functionally, presumably involved in the processing and regular turnover of intracellular proteins. Catalyzes the removal of unsubstituted N-terminal amino acids from various peptides. This is Cytosol aminopeptidase (pepA) from Buchnera aphidicola subsp. Acyrthosiphon pisum (strain APS) (Acyrthosiphon pisum symbiotic bacterium).